The chain runs to 96 residues: Cysteine proteinase (96 aa).

Cys-25 and Cys-79 are oxidised to a cystine. Active-site residues include His-31 and Asn-58.

Belongs to the peptidase C1 family.

This Carica papaya (Papaya) protein is Cysteine proteinase.